The primary structure comprises 319 residues: MAALSSNWKKLQAKLKEESASKPSLKRKPETPATNPPTKKPKVQKSFTKTLKAAKSAQTSDKKKMGGVHSSKIEETAPGTSTSLALWAEDHDVSAEALAEAYNLGAKDNSMMLAAAKDKINHGLTEGIEIGKYIAIDCEMVGVGPGGHESALARVSIVDFHGVQIYDSYVKPKEKVTNWRTAVSGISQKSMRFARDFEEVQAEIDKLLRGRILVGHDLKHDLEALILSHPGKDIRDTAKFSGFKKYANGRKPSLRVLAQQLLGVEIQGGEHSSIEDARATMLLFRKHKSAFDVDHANRYAPKTASGGGQKGNKPKKKKK.

The tract at residues 1–75 (MAALSSNWKK…GGVHSSKIEE (75 aa)) is disordered. The region spanning 132-293 (KYIAIDCEMV…FRKHKSAFDV (162 aa)) is the Exonuclease domain. A disordered region spans residues 295-319 (HANRYAPKTASGGGQKGNKPKKKKK).

This sequence belongs to the REXO4 family.

The protein resides in the nucleus. Exoribonuclease involved in ribosome biosynthesis. Involved in the processing of ITS1, the internal transcribed spacer localized between the 18S and 5.8S rRNAs. This Gibberella zeae (strain ATCC MYA-4620 / CBS 123657 / FGSC 9075 / NRRL 31084 / PH-1) (Wheat head blight fungus) protein is RNA exonuclease 4 (REX4).